The primary structure comprises 376 residues: Putative transmembrane protein 183BP (376 aa).

Disordered stretches follow at residues 1-20 (MARG…AMPK) and 102-127 (AQEE…ELDG). The chain crosses the membrane as a helical span at residues 300 to 320 (LNFIFIPIVMGMIFTLFTINV).

This sequence belongs to the TMEM183 family. In terms of tissue distribution, expressed in brain, lung, pancreas, thymus, intestine and blood. Not detected in heart, placenta, liver, muscle, kidney, spleen, prostate, testis, ovary and colon.

It is found in the membrane. In Homo sapiens (Human), this protein is Putative transmembrane protein 183BP.